A 254-amino-acid polypeptide reads, in one-letter code: uncharacterized protein (254 aa).

This sequence belongs to the nucleoside-specific channel-forming outer membrane porin (Tsx) (TC 1.B.10) family.

This is an uncharacterized protein from Escherichia coli (strain K12).